Consider the following 212-residue polypeptide: Large ribosomal subunit protein uL3 (212 aa).

Residues 134-155 (RNSHGNSLSHRAPGSIGQNQSP) form a disordered region. N5-methylglutamine is present on Gln153.

The protein belongs to the universal ribosomal protein uL3 family. As to quaternary structure, part of the 50S ribosomal subunit. Forms a cluster with proteins L14 and L19. Post-translationally, methylated by PrmB.

One of the primary rRNA binding proteins, it binds directly near the 3'-end of the 23S rRNA, where it nucleates assembly of the 50S subunit. The sequence is that of Large ribosomal subunit protein uL3 from Pseudoalteromonas atlantica (strain T6c / ATCC BAA-1087).